The following is a 358-amino-acid chain: Glutamine synthetase (358 aa).

One can recognise a GS beta-grasp domain in the interval 26 to 105; that stretch reads ILAEYIWIDG…VLAECWNADG (80 aa). Residues 112 to 358 form the GS catalytic domain; it reads HRHECAKIME…IMMETICGGI (247 aa).

This sequence belongs to the glutamine synthetase family. In terms of assembly, homooctamer.

Its subcellular location is the cytoplasm. It catalyses the reaction L-glutamate + NH4(+) + ATP = L-glutamine + ADP + phosphate + H(+). In Tuber borchii (White truffle), this protein is Glutamine synthetase (GLN1).